An 886-amino-acid chain; its full sequence is CRM-domain containing factor CFM3, chloroplastic/mitochondrial (886 aa).

A chloroplast and mitochondrion-targeting transit peptide spans 1–70 (MAAAAMAISP…LDLRPEPSPS (70 aa)). 2 disordered regions span residues 56–84 (RPAS…TSRS) and 269–291 (TKGT…PPGH). CRM domains are found at residues 174–270 (LTLP…EPTK), 378–475 (PSLS…ELAE), and 590–690 (ETIT…SKLR). A compositionally biased stretch (polar residues) spans 270–281 (KGTSKNTQTLGM). The disordered stretch occupies residues 771–886 (SFDNSVAVQN…QSTELTNTCS (116 aa)). Residues 793-827 (NSDDEGDYSDEDDDEDDDNDEEDGFDYENDDEDDV) show a composition bias toward acidic residues. Composition is skewed to polar residues over residues 841 to 852 (DFGSSDSENYVS) and 869 to 886 (DSRN…NTCS).

Interacts with RNA. Part of large ribonucleo-protein particles that contain CAF1 and/or CAF2, and RNC1.

The protein localises to the plastid. It is found in the chloroplast. The protein resides in the mitochondrion. Binds specific group II introns in chloroplasts and facilitates their splicing. Acts on subgroup IIB introns. The substrates of the subgroup IIB also require the CRM domain proteins CAF1 or CAF2, with a simultaneous binding of CFM3 and CAF1 or CAF2. May influence the biogenesis of the mitochondrial small ribosomal subunit. This chain is CRM-domain containing factor CFM3, chloroplastic/mitochondrial, found in Oryza sativa subsp. japonica (Rice).